A 176-amino-acid polypeptide reads, in one-letter code: Shikimate kinase (176 aa).

12–17 is a binding site for ATP; sequence GSGKST. Ser-16 serves as a coordination point for Mg(2+). Positions 34, 58, and 80 each coordinate substrate. An ATP-binding site is contributed by Arg-117. Arg-136 is a binding site for substrate. Residue Arg-153 participates in ATP binding.

This sequence belongs to the shikimate kinase family. In terms of assembly, monomer. Requires Mg(2+) as cofactor.

The protein resides in the cytoplasm. The enzyme catalyses shikimate + ATP = 3-phosphoshikimate + ADP + H(+). The protein operates within metabolic intermediate biosynthesis; chorismate biosynthesis; chorismate from D-erythrose 4-phosphate and phosphoenolpyruvate: step 5/7. Its function is as follows. Catalyzes the specific phosphorylation of the 3-hydroxyl group of shikimic acid using ATP as a cosubstrate. The protein is Shikimate kinase of Mycobacterium bovis (strain ATCC BAA-935 / AF2122/97).